Reading from the N-terminus, the 231-residue chain is LexA repressor (231 aa).

Residues 31–51 (RAEIATEFGFRSANAAEEHLQ) constitute a DNA-binding region (H-T-H motif). Catalysis depends on for autocatalytic cleavage activity residues serine 148 and lysine 185.

This sequence belongs to the peptidase S24 family. In terms of assembly, homodimer.

The enzyme catalyses Hydrolysis of Ala-|-Gly bond in repressor LexA.. In terms of biological role, represses a number of genes involved in the response to DNA damage (SOS response), including recA and lexA. In the presence of single-stranded DNA, RecA interacts with LexA causing an autocatalytic cleavage which disrupts the DNA-binding part of LexA, leading to derepression of the SOS regulon and eventually DNA repair. This is LexA repressor from Leptothrix cholodnii (strain ATCC 51168 / LMG 8142 / SP-6) (Leptothrix discophora (strain SP-6)).